Reading from the N-terminus, the 237-residue chain is Phosphoribosylaminoimidazole-succinocarboxamide synthase (237 aa).

This sequence belongs to the SAICAR synthetase family.

The catalysed reaction is 5-amino-1-(5-phospho-D-ribosyl)imidazole-4-carboxylate + L-aspartate + ATP = (2S)-2-[5-amino-1-(5-phospho-beta-D-ribosyl)imidazole-4-carboxamido]succinate + ADP + phosphate + 2 H(+). It functions in the pathway purine metabolism; IMP biosynthesis via de novo pathway; 5-amino-1-(5-phospho-D-ribosyl)imidazole-4-carboxamide from 5-amino-1-(5-phospho-D-ribosyl)imidazole-4-carboxylate: step 1/2. The chain is Phosphoribosylaminoimidazole-succinocarboxamide synthase from Citrobacter koseri (strain ATCC BAA-895 / CDC 4225-83 / SGSC4696).